Here is a 108-residue protein sequence, read N- to C-terminus: Glutaredoxin-C10 (108 aa).

In terms of domain architecture, Glutaredoxin spans 1 to 107; it reads MERVAKLASE…PMLKNAGALW (107 aa). An intrachain disulfide couples C21 to C24. Residues 105–108 carry the Responsive for interaction with TGA factors motif; it reads ALWL.

The protein belongs to the glutaredoxin family. CC-type subfamily.

It is found in the cytoplasm. The protein localises to the nucleus. Its function is as follows. Has a glutathione-disulfide oxidoreductase activity in the presence of NADPH and glutathione reductase. Reduces low molecular weight disulfides and proteins. This is Glutaredoxin-C10 (GRXC10) from Oryza sativa subsp. japonica (Rice).